The primary structure comprises 258 residues: ATP synthase subunit a (258 aa).

Helical transmembrane passes span 38-58, 94-114, 118-138, 193-213, and 215-235; these read KPVW…YVGA, WFPY…IGLF, YPVT…FVLT, ILAG…FGLP, and AFVS…VAVI.

The protein belongs to the ATPase A chain family. In terms of assembly, F-type ATPases have 2 components, CF(1) - the catalytic core - and CF(0) - the membrane proton channel. CF(1) has five subunits: alpha(3), beta(3), gamma(1), delta(1), epsilon(1). CF(0) has three main subunits: a(1), b(2) and c(9-12). The alpha and beta chains form an alternating ring which encloses part of the gamma chain. CF(1) is attached to CF(0) by a central stalk formed by the gamma and epsilon chains, while a peripheral stalk is formed by the delta and b chains.

It localises to the cell membrane. Its function is as follows. Key component of the proton channel; it plays a direct role in the translocation of protons across the membrane. The chain is ATP synthase subunit a from Rubrobacter xylanophilus (strain DSM 9941 / JCM 11954 / NBRC 16129 / PRD-1).